Reading from the N-terminus, the 117-residue chain is Large ribosomal subunit protein uL24 (117 aa).

Residues 1-10 show a composition bias toward basic residues; it reads MSKQPRKQRK. A disordered region spans residues 1–28; the sequence is MSKQPRKQRKALYTAPLHKRHNSMSVHL.

Belongs to the universal ribosomal protein uL24 family. In terms of assembly, part of the 50S ribosomal subunit.

In terms of biological role, one of two assembly initiator proteins, it binds directly to the 5'-end of the 23S rRNA, where it nucleates assembly of the 50S subunit. Functionally, located at the polypeptide exit tunnel on the outside of the subunit. This is Large ribosomal subunit protein uL24 from Methanosphaera stadtmanae (strain ATCC 43021 / DSM 3091 / JCM 11832 / MCB-3).